A 324-amino-acid polypeptide reads, in one-letter code: Protoheme IX farnesyltransferase 2 (324 aa).

The next 9 membrane-spanning stretches (helical) occupy residues 39–59 (LIKPRVIELLLVTTIPAMLLA), 63–83 (IPSPWLVIATLVGGTMAAGSA), 115–135 (HALVFGIALGAGSFGWLWATT), 137–157 (LLSAVLAVATILFYVFVYTLV), 166–186 (IVWGGAAGCMPVVIGWAGVTG), 192–212 (ALVMFGIIFFWTPPHTWSLAM), 239–259 (IVVFTWLMVLWTLLLAPATGW), 260–280 (LYTAFAIAAGAWFLVLAHRLH), and 302–322 (LMIVCVALAVDSALSLPVLGW).

This sequence belongs to the UbiA prenyltransferase family. Protoheme IX farnesyltransferase subfamily.

The protein resides in the cell membrane. It catalyses the reaction heme b + (2E,6E)-farnesyl diphosphate + H2O = Fe(II)-heme o + diphosphate. It participates in porphyrin-containing compound metabolism; heme O biosynthesis; heme O from protoheme: step 1/1. In terms of biological role, converts heme B (protoheme IX) to heme O by substitution of the vinyl group on carbon 2 of heme B porphyrin ring with a hydroxyethyl farnesyl side group. The chain is Protoheme IX farnesyltransferase 2 from Saccharopolyspora erythraea (strain ATCC 11635 / DSM 40517 / JCM 4748 / NBRC 13426 / NCIMB 8594 / NRRL 2338).